The chain runs to 267 residues: N-formylglutamate deformylase (267 aa).

This sequence belongs to the N-formylglutamate deformylase family. Monomer.

It catalyses the reaction N-formyl-L-glutamate + H2O = formate + L-glutamate. Its pathway is amino-acid degradation; L-histidine degradation into L-glutamate; L-glutamate from N-formimidoyl-L-glutamate (deiminase route): step 2/2. Its activity is regulated as follows. Stimulated by Co(2+). Fe(2+) is also a good activator, particularly at lower concentrations, but it inhibits slightly the activity when used at concentrations over 0.1 mM. Other divalent metals tested (Cd(2+), Ca(2+), Mn(2+), Zn(2+), Ni(2+) and Mg(2+)) are not effective activators. Functionally, catalyzes the hydrolysis of N-formyl-L-glutamate to formate and L-glutamate. The protein is N-formylglutamate deformylase of Pseudomonas putida (Arthrobacter siderocapsulatus).